The sequence spans 324 residues: Quinolinate synthase (324 aa).

Iminosuccinate is bound by residues His39 and Ser56. Cys101 is a [4Fe-4S] cluster binding site. Iminosuccinate contacts are provided by residues 127-129 (YIN) and Ser144. Cys187 contributes to the [4Fe-4S] cluster binding site. Iminosuccinate-binding positions include 213 to 215 (HPE) and Thr230. Cys280 provides a ligand contact to [4Fe-4S] cluster.

It belongs to the quinolinate synthase family. Type 2 subfamily. Requires [4Fe-4S] cluster as cofactor.

The protein localises to the cytoplasm. The enzyme catalyses iminosuccinate + dihydroxyacetone phosphate = quinolinate + phosphate + 2 H2O + H(+). It functions in the pathway cofactor biosynthesis; NAD(+) biosynthesis; quinolinate from iminoaspartate: step 1/1. In terms of biological role, catalyzes the condensation of iminoaspartate with dihydroxyacetone phosphate to form quinolinate. In Trichormus variabilis (strain ATCC 29413 / PCC 7937) (Anabaena variabilis), this protein is Quinolinate synthase.